The chain runs to 931 residues: GPI ethanolamine phosphate transferase 1 (931 aa).

A topological domain (cytoplasmic) is located at residue Met-1. A helical transmembrane segment spans residues 2–22 (LLFFALGLLIHFVFFASIFDI). The Lumenal portion of the chain corresponds to 23–442 (YFTSPLVHGM…SYYHTYDRLF (420 aa)). Asn-128, Asn-192, Asn-295, and Asn-350 each carry an N-linked (GlcNAc...) asparagine glycan. Residues 443–463 (LGINVAVGFVGWMSYTSLLII) traverse the membrane as a helical segment. Residues 464 to 480 (KSHSNIPKGTRKEGKKP) lie on the Cytoplasmic side of the membrane. The chain crosses the membrane as a helical span at residues 481–501 (HCLLLYSFIATGVLVACFLMI). Position 502 (Gln-502) is a topological domain, lumenal. Residues 503-523 (ACPWTYYVYCLLPVPIWYAVL) form a helical membrane-spanning segment. The Cytoplasmic portion of the chain corresponds to 524 to 543 (REHEVIQDLVESLLTFPRSH). Residues 544–564 (FVAYLLVFTLGIEVLVLSFFY) form a helical membrane-spanning segment. A topological domain (lumenal) is located at residue Arg-565. Residues 566–586 (YMLTAGLIVFAGWPFLTQLWT) traverse the membrane as a helical segment. Residues 587–591 (RAKIT) lie on the Cytoplasmic side of the membrane. The chain crosses the membrane as a helical span at residues 592–612 (FLSWAFFSLLLAVFPLMPVVG). Over 613–618 (RKPNLS) the chain is Lumenal. The N-linked (GlcNAc...) asparagine glycan is linked to Asn-616. The chain crosses the membrane as a helical span at residues 619–639 (LVMGAGFLVLLLSLAVVTTLG). Topologically, residues 640–649 (KRNIKLVKGE) are cytoplasmic. Residues 650 to 670 (LLVLLLQMLSTVLSMYVVYST) form a helical membrane-spanning segment. The Lumenal portion of the chain corresponds to 671–685 (HHSLLKKEGLPLMNQ). The helical transmembrane segment at 686-706 (IVSWATLASSLVAPLLSSTAL) threads the bilayer. Topologically, residues 707 to 723 (SQRLASILLSLMSTYLL) are cytoplasmic. The helical transmembrane segment at 724–744 (LSTGYEALFPLVLSCLMFVWI) threads the bilayer. Residues 745 to 786 (QVEQETLQQPGVSCKQKLTSIQFTCDTDIAQFRQLCPDDIRR) are Lumenal-facing. A helical membrane pass occupies residues 787-807 (AFFLVFFLLTAFFGTGNIASI). Topologically, residues 808–824 (NSFDLASVYCFLTVFSP) are cytoplasmic. Residues 825 to 845 (FMMGALMMWKILIPFVLVMCA) form a helical membrane-spanning segment. Topologically, residues 846–858 (FEAVQITTQLSSK) are lumenal. The chain crosses the membrane as a helical span at residues 859–879 (GLFLVVLIISDIMALHFFFLV). Residues 880-894 (KDSGSWLDIGTSISH) are Cytoplasmic-facing. The chain crosses the membrane as a helical span at residues 895-915 (YVIVMSMTIFLVFLNGLAQLL). Over 916 to 931 (TTKKLQLCGKPKSHLM) the chain is Lumenal.

It belongs to the PIGG/PIGN/PIGO family. PIGN subfamily.

It localises to the endoplasmic reticulum membrane. It functions in the pathway glycolipid biosynthesis; glycosylphosphatidylinositol-anchor biosynthesis. Ethanolamine phosphate transferase that catalyzes an ethanolamine phosphate (EtNP) transfer from phosphatidylethanolamine (PE) to the 2-OH position of the first alpha-1,4-linked mannose of the alpha-D-Man-(1-&gt;6)-alpha-D-Man-(1-&gt;4)-alpha-D-GlcN-(1-&gt;6)-(1-radyl,2-acyl-sn-glycero-3-phospho)-2-acyl-inositol (also termed H3) intermediate to generate an alpha-D-Man-(1-&gt;6)-2-PEtn-alpha-D-Man-(1-&gt;4)-alpha-D-GlcN-(1-&gt;6)-(1-radyl,2-acyl-sn-glycero-3-phospho)-2-acyl-inositol and participates in the eighth step of the glycosylphosphatidylinositol-anchor biosynthesis. May act as suppressor of replication stress and chromosome missegregation. In Mus musculus (Mouse), this protein is GPI ethanolamine phosphate transferase 1.